Here is a 52-residue protein sequence, read N- to C-terminus: MKLPRSSLVWCVLIVCLTLLIFTYLTRKSLCEIRYRDGYREVAAFMAYESGK.

Residues 6 to 26 (SSLVWCVLIVCLTLLIFTYLT) traverse the membrane as a helical segment.

This sequence belongs to the Hok/Gef family.

It is found in the cell inner membrane. Its function is as follows. Toxic component of a type I toxin-antitoxin (TA) system. Part of the plasmid maintenance system, encodes a toxic protein that collapses the transmembrane potential and arrests respiration. When the adjacent non-translated flmB (sok) gene is disrupted FlmA no longer functions in plasmid maintenance (i.e. FlmB probably encodes an antisense antitoxin RNA). Translation of FlmA may be coupled to the upstream flmC gene. The protein is Stable plasmid inheritance protein (flmA) of Escherichia coli O157:H7.